The following is a 397-amino-acid chain: Nicotinate phosphoribosyltransferase (397 aa).

Residue H221 is modified to Phosphohistidine; by autocatalysis.

Belongs to the NAPRTase family. Transiently phosphorylated on a His residue during the reaction cycle. Phosphorylation strongly increases the affinity for substrates and increases the rate of nicotinate D-ribonucleotide production. Dephosphorylation regenerates the low-affinity form of the enzyme, leading to product release.

It carries out the reaction nicotinate + 5-phospho-alpha-D-ribose 1-diphosphate + ATP + H2O = nicotinate beta-D-ribonucleotide + ADP + phosphate + diphosphate. It functions in the pathway cofactor biosynthesis; NAD(+) biosynthesis; nicotinate D-ribonucleotide from nicotinate: step 1/1. Functionally, catalyzes the synthesis of beta-nicotinate D-ribonucleotide from nicotinate and 5-phospho-D-ribose 1-phosphate at the expense of ATP. The sequence is that of Nicotinate phosphoribosyltransferase from Herminiimonas arsenicoxydans.